The following is a 757-amino-acid chain: MSWSPSLPTQTCGAWEMKERLGTGGFGNVIRWHNQATGEQIAIKQCRQELSPKNRNRWCLEIQIMRRLNHPNVVAARDVPEGMQNLAPNDLPLLAMEYCQGGDLRRYLNQFENCCGLREGAVLTLLSDIASALRYLHENRIIHRDLKPENIVLQQGEKRLIHKIIDLGYAKELDQGSLCTSFVGTLQYLAPELLEQQKYTVTVDYWSFGTLAFECITGFRPFLPNWQPVQWHSKVRQKSEVDIVVSEDLNGAVKFSSSLPFPNNLNSVLAERLEKWLQLMLMWHPRQRGTDPQYGPNGCFRALDDILNLKLVHVLNMVTGTVHTYPVTEDESLQSLKTRIQENTGILETDQELLQKAGLVLLPDKPATQCISDSKTNEGLTLDMDLVFLLDNSKINYETQITPRPPPESVSCILQEPKRNLSFFQLRKVWGQVWHSIQTLKEDCNRLQQGQRAAMMSLLRNNSCLSKMKNAMASTAQQLKAKLDFFKTSIQIDLEKYKEQTEFGITSDKLLLAWREMEQAVEQCGRENDVKHLVERMMALQTDIVDLQRSPMGRKQGGTLDDLEEQARELYRKLREKPRDQRTEGDSQEMVRLLLQAIQSFEKKVRVIYTQLSKTVVCKQKALELLPKVEEVVSLMNEDERTVVRLQEKRQKELWNLLKIACSKVRGPVSGSPDSMNVSRLSHPGQLMSQPSSACDSLPESDKKSEELVAEAHALCSRLESALQDTVKEQDRSFTTLDWSWLQMEDEERCSLEQACD.

In terms of domain architecture, Protein kinase spans 15–300 (WEMKERLGTG…DPQYGPNGCF (286 aa)). Residues 21–29 (LGTGGFGNV) and Lys44 each bind ATP. Residue Asp145 is the Proton acceptor of the active site. Residue Lys163 forms a Glycyl lysine isopeptide (Lys-Gly) (interchain with G-Cter in ubiquitin) linkage. Ser177 is subject to Phosphoserine; by TBK1 and PKC/PRKCZ. Cys179 carries the post-translational modification S-nitrosocysteine. Phosphoserine; by TBK1, PKC/PRKCZ and PDPK1 is present on Ser181. Pro191 is modified (hydroxyproline). The interval 458-479 (LLRNNSCLSKMKNAMASTAQQL) is leucine-zipper. Phosphoserine; by autocatalysis is present on Ser670. The residue at position 672 (Ser672) is a Phosphoserine. 8 positions are modified to phosphoserine; by autocatalysis: Ser675, Ser682, Ser689, Ser692, Ser697, Ser705, Ser733, and Ser740. A disordered region spans residues 683–703 (HPGQLMSQPSSACDSLPESDK). Positions 737–742 (LDWSWL) are NEMO-binding.

This sequence belongs to the protein kinase superfamily. Ser/Thr protein kinase family. I-kappa-B kinase subfamily. As to quaternary structure, component of the I-kappa-B-kinase (IKK) core complex consisting of CHUK, IKBKB and IKBKG; probably four alpha/CHUK-beta/IKBKB dimers are associated with four gamma/IKBKG subunits. The IKK core complex seems to associate with regulatory or adapter proteins to form a IKK-signalosome holo-complex. The IKK complex associates with TERF2IP/RAP1, leading to promote IKK-mediated phosphorylation of RELA/p65. Part of a complex composed of NCOA2, NCOA3, CHUK/IKKA, IKBKB, IKBKG and CREBBP. Part of a 70-90 kDa complex at least consisting of CHUK/IKKA, IKBKB, NFKBIA, RELA, ELP1 and MAP3K14. Found in a membrane raft complex, at least composed of BCL10, CARD11, DPP4 and IKBKB. Interacts with SQSTM1 through PRKCZ or PRKCI. Forms an NGF-induced complex with IKBKB, PRKCI and TRAF6. May interact with MAVS/IPS1. Interacts with NALP2. Interacts with TICAM1. Interacts with FAF1; the interaction disrupts the IKK complex formation. Interacts with ATM. Part of a ternary complex consisting of TANK, IKBKB and IKBKG. Interacts with NIBP; the interaction is direct. Interacts with ARRB1 and ARRB2. Interacts with TRIM21. Interacts with NLRC5; prevents IKBKB phosphorylation and kinase activity. Interacts with PDPK1. Interacts with EIF2AK2/PKR. The phosphorylated form interacts with PPM1A and PPM1B. Interacts with ZNF268 isoform 2; the interaction is further increased in a TNF-alpha-dependent manner. Interacts with IKBKE. Interacts with ZC3H12A. Interacts with AKAP13. Interacts with LRRC14; disrupts IKBKB-IKBKG interaction preventing I-kappa-B-kinase (IKK) core complex formation and leading to a decrease of IKBKB phosphorylation and NF-kappaB activation. Interacts with SASH1. Interacts with ARFIP2. Interacts with FKBP5. Interacts with kinase TBK1; the complex interacts with STAT1, leading to phosphorylation of STAT1 on 'Thr-748' by IKBKB. Upon cytokine stimulation, phosphorylated on Ser-177 and Ser-181 by MEKK1 and/or MAP3K14/NIK as well as TBK1 and PRKCZ; which enhances activity. Phosphorylated by MAP3K7/TAK1 in response to NOD1 and NOD2 signaling, promoting activation and phosphorylation of NF-kappa-B inhibitors, leading to NF-kappa-B activation. Once activated, autophosphorylates on the C-terminal serine cluster; which decreases activity and prevents prolonged activation of the inflammatory response. Phosphorylated by the IKK-related kinases TBK1 and IKBKE, which is associated with reduced CHUK/IKKA and IKBKB activity and NF-kappa-B-dependent gene transcription. Dephosphorylated at Ser-177 and Ser-181 by PPM1A and PPM1B. In terms of processing, ubiquitinated. Monoubiquitination involves TRIM21 that leads to inhibition of Tax-induced NF-kappa-B signaling. 'Ser-163' may not serve as a monoubiquitination site. Ubiquitination on 'Ser-163' may modulate phosphorylation on C-terminal serine residues. Post-translationally, hydroxylated by PHD1/EGLN2, loss of hydroxylation under hypoxic conditions results in activation of NF-kappa-B. Detected in heart (at protein level). Expressed in liver, kidney and spleen.

The protein resides in the cytoplasm. It localises to the nucleus. The protein localises to the membrane raft. The enzyme catalyses L-seryl-[I-kappa-B protein] + ATP = O-phospho-L-seryl-[I-kappa-B protein] + ADP + H(+). It catalyses the reaction L-seryl-[protein] + ATP = O-phospho-L-seryl-[protein] + ADP + H(+). It carries out the reaction L-threonyl-[protein] + ATP = O-phospho-L-threonyl-[protein] + ADP + H(+). Functionally, serine kinase that plays an essential role in the NF-kappa-B signaling pathway which is activated by multiple stimuli such as inflammatory cytokines, bacterial or viral products, DNA damages or other cellular stresses. Acts as a part of the canonical IKK complex in the conventional pathway of NF-kappa-B activation. Phosphorylates inhibitors of NF-kappa-B on 2 critical serine residues. These modifications allow polyubiquitination of the inhibitors and subsequent degradation by the proteasome. In turn, free NF-kappa-B is translocated into the nucleus and activates the transcription of hundreds of genes involved in immune response, growth control, or protection against apoptosis. In addition to the NF-kappa-B inhibitors, phosphorylates several other components of the signaling pathway including NEMO/IKBKG, NF-kappa-B subunits RELA and NFKB1, as well as IKK-related kinases TBK1 and IKBKE. IKK-related kinase phosphorylations may prevent the overproduction of inflammatory mediators since they exert a negative regulation on canonical IKKs. Phosphorylates FOXO3, mediating the TNF-dependent inactivation of this pro-apoptotic transcription factor. Also phosphorylates other substrates including NAA10, NCOA3, BCL10 and IRS1. Phosphorylates RIPK1 at 'Ser-25' which represses its kinase activity and consequently prevents TNF-mediated RIPK1-dependent cell death. Phosphorylates the C-terminus of IRF5, stimulating IRF5 homodimerization and translocation into the nucleus. Following bacterial lipopolysaccharide (LPS)-induced TLR4 endocytosis, phosphorylates STAT1 at 'Thr-748' which restricts interferon signaling and anti-inflammatory responses and promotes innate inflammatory responses. IKBKB-mediated phosphorylation of STAT1 at 'Thr-748' promotes binding of STAT1 to the ARID5A promoter, resulting in transcriptional activation of ARID5A and subsequent ARID5A-mediated stabilization of IL6. It also promotes binding of STAT1 to the IL12B promoter and activation of IL12B transcription. This is Inhibitor of nuclear factor kappa-B kinase subunit beta (Ikbkb) from Mus musculus (Mouse).